The primary structure comprises 268 residues: Energy-coupling factor transporter transmembrane protein EcfT (268 aa).

Transmembrane regions (helical) follow at residues 29 to 49 (VFIFLVFMFMTRDPLLLTVAV), 75 to 95 (IIIVLTFVLHLFMTGGGEVIV), 107 to 127 (LIEGFMLAMKLAMIITIASLL), 152 to 172 (LPTHELALMMSIALRFIPTLI), and 242 to 262 (WGLKDSVVLAVFLLFAAAVMA).

Belongs to the energy-coupling factor EcfT family. In terms of assembly, forms a stable energy-coupling factor (ECF) transporter complex composed of 2 membrane-embedded substrate-binding proteins (S component), 2 ATP-binding proteins (A component) and 2 transmembrane proteins (T component). May be able to interact with more than 1 S component at a time.

It is found in the cell membrane. Its function is as follows. Transmembrane (T) component of an energy-coupling factor (ECF) ABC-transporter complex. Unlike classic ABC transporters this ECF transporter provides the energy necessary to transport a number of different substrates. This chain is Energy-coupling factor transporter transmembrane protein EcfT, found in Bacillus selenitireducens (strain ATCC 700615 / DSM 15326 / MLS10).